We begin with the raw amino-acid sequence, 359 residues long: GTP cyclohydrolase FolE2 (359 aa).

Belongs to the GTP cyclohydrolase IV family.

It carries out the reaction GTP + H2O = 7,8-dihydroneopterin 3'-triphosphate + formate + H(+). The protein operates within cofactor biosynthesis; 7,8-dihydroneopterin triphosphate biosynthesis; 7,8-dihydroneopterin triphosphate from GTP: step 1/1. Its function is as follows. Converts GTP to 7,8-dihydroneopterin triphosphate. This chain is GTP cyclohydrolase FolE2, found in Cereibacter sphaeroides (strain KD131 / KCTC 12085) (Rhodobacter sphaeroides).